The primary structure comprises 204 residues: WW domain-containing protein C11B10.08 (204 aa).

The 37-residue stretch at 7–43 folds into the WW domain; the sequence is EGLPNGWVAQWDERYKCYFYVNESDPKAKPQWECPVR. The disordered stretch occupies residues 32–117; that stretch reads PKAKPQWECP…GYPQQPYYYP (86 aa). 2 stretches are compositionally biased toward low complexity: residues 66–100 and 108–117; these read YSNS…GAAP and GYPQQPYYYP.

It localises to the cytoplasm. The protein localises to the nucleus. This is WW domain-containing protein C11B10.08 from Schizosaccharomyces pombe (strain 972 / ATCC 24843) (Fission yeast).